Here is a 691-residue protein sequence, read N- to C-terminus: MGSNGTEEITSDISTGNAATTIEIKIKMLDSQTFTLRVDKQMPVPALKAQIESLTGVMSERQRLICQGKVLKDDQLLSAYHVEDGHTLHLVARHPDLTPPGSLPNHSATEPNSSTGHGYSNQVAPGVFIETFNVPVQGDGVPSEINRIVSAVLGSMGLPNFASGGEGIFVREHDSTGLGRTSDFTGNPSRPQPEQAGFRISSDSSRNSFGFPAAVSLGSLGSLQPPVIPDSLTTLLQYLSHINHEFDTIAREGGNNVQAAEAHRNEERGFVSSRLSSTPEGLSSPASLAEVLLSTRRVIIEQAGECLLQLARQLENHADIADPLSRSSTQSRALRTGVMFYNLGAYLLELGRTTMTLRLGQTPSEAVVNGGPAVFISPSGPNHIMVQPLPFQPGASFGAIPVGAAQSNSSLGGGLGSSFFPRRIDIQIRRGASTTPGTNQEEHGDTQSASVQRNTGESSVNQTTSRRPDASIAGEPGVRVVPIRTMVAAVPVLGRFQSSVNTNNEQGSQPASQQHTAPHSTAEFTLHRQSMEDSARNGTLPTPNTQQEPSSSRVVNINILSAGGPENNESERQVPSSVLQFLRALFPGGEIHVEDPSSQGTTAGVTSAATSSGAAQAPEAEPNVSEEGIFLSNLLRGIMPVISQHIGRGGDSSEDQVTRDPSTQVEIGAGTSRRQSDSESSPPNSKRQKME.

The region spanning 22–97 (IEIKIKMLDS…LHLVARHPDL (76 aa)) is the Ubiquitin-like domain. Disordered regions lie at residues 92 to 118 (ARHP…TGHG), 176 to 203 (TGLG…ISSD), 264 to 283 (RNEE…EGLS), 432 to 473 (ASTT…ASIA), 499 to 554 (SVNT…SSRV), 590 to 624 (EIHV…EPNV), and 645 to 691 (HIGR…QKME). 5 stretches are compositionally biased toward polar residues: residues 104–118 (PNHS…TGHG), 178–189 (LGRTSDFTGNPS), 273–283 (SRLSSTPEGLS), 446–465 (TQSA…QTTS), and 499–523 (SVNT…STAE). The span at 525 to 535 (TLHRQSMEDSA) shows a compositional bias: basic and acidic residues. Residues 536-554 (RNGTLPTPNTQQEPSSSRV) show a composition bias toward polar residues. Over residues 597–617 (SSQGTTAGVTSAATSSGAAQA) the composition is skewed to low complexity.

As to quaternary structure, interacts with CCAMK. In terms of processing, phosphorylated at the N-terminus by CCAMK. In terms of tissue distribution, highly epressed in roots. Expressed at very low levels in leaves and stems.

Its subcellular location is the nucleus. Involved in root nodulation. Required for root nodule organogenesis after infection by symbiotic rhizobia. Probably not involved in arbuscular mycorrhizal (AM) symbiosis. Acts downstream of CCAMK. In Lotus japonicus (Lotus corniculatus var. japonicus), this protein is Ubiquitin-like domain-containing protein CIP73.